A 247-amino-acid polypeptide reads, in one-letter code: MRLTQYLASKLKNFSNLPKEYIERSKKQVYWQTPKEINYLPRTVERKRFRYTTNRSWTGQFRQQNMPGTVRRKVLVEPIEDWSFFRGDRIEVLVGKDKGKQGIVTQVIPERNWVIVEGLNWHYRKVGGEKEFPGIIIKSEAPLHVTKDIRLVDPSDLQGTDFEWRFTEEGEKVRVSLRSGRIIPIPETNNQTHDYKTPNAYIEREKDTPGAVVGEITFQPKLSTFEMDIMEEMGIKEERTPVKSYWY.

The KOW domain occupies 84-117; it reads FFRGDRIEVLVGKDKGKQGIVTQVIPERNWVIVE.

Belongs to the universal ribosomal protein uL24 family. In terms of assembly, component of the mitochondrial ribosome large subunit (39S) which comprises a 16S rRNA and about 50 distinct proteins.

It localises to the mitochondrion. The polypeptide is Large ribosomal subunit protein uL24m (mRpL24) (Drosophila melanogaster (Fruit fly)).